Reading from the N-terminus, the 161-residue chain is Cyclic pyranopterin monophosphate synthase (161 aa).

Substrate-binding positions include 75–77 and 113–114; these read LCH and ME. Residue D128 is part of the active site.

Belongs to the MoaC family. Homohexamer; trimer of dimers.

It catalyses the reaction (8S)-3',8-cyclo-7,8-dihydroguanosine 5'-triphosphate = cyclic pyranopterin phosphate + diphosphate. It functions in the pathway cofactor biosynthesis; molybdopterin biosynthesis. Functionally, catalyzes the conversion of (8S)-3',8-cyclo-7,8-dihydroguanosine 5'-triphosphate to cyclic pyranopterin monophosphate (cPMP). The polypeptide is Cyclic pyranopterin monophosphate synthase (Cronobacter sakazakii (strain ATCC BAA-894) (Enterobacter sakazakii)).